We begin with the raw amino-acid sequence, 249 residues long: Triosephosphate isomerase (249 aa).

Position 9–11 (9–11) interacts with substrate; sequence NWK. Catalysis depends on H95, which acts as the Electrophile. E166 functions as the Proton acceptor in the catalytic mechanism. Substrate contacts are provided by residues G172, S211, and 232–233; that span reads GG.

The protein belongs to the triosephosphate isomerase family. Homodimer.

The protein resides in the cytoplasm. The enzyme catalyses D-glyceraldehyde 3-phosphate = dihydroxyacetone phosphate. Its pathway is carbohydrate biosynthesis; gluconeogenesis. The protein operates within carbohydrate degradation; glycolysis; D-glyceraldehyde 3-phosphate from glycerone phosphate: step 1/1. In terms of biological role, involved in the gluconeogenesis. Catalyzes stereospecifically the conversion of dihydroxyacetone phosphate (DHAP) to D-glyceraldehyde-3-phosphate (G3P). This Legionella pneumophila (strain Lens) protein is Triosephosphate isomerase.